Here is a 206-residue protein sequence, read N- to C-terminus: Small ribosomal subunit protein uS4 (206 aa).

The S4 RNA-binding domain occupies serine 96–alanine 158.

Belongs to the universal ribosomal protein uS4 family. In terms of assembly, part of the 30S ribosomal subunit. Contacts protein S5. The interaction surface between S4 and S5 is involved in control of translational fidelity.

One of the primary rRNA binding proteins, it binds directly to 16S rRNA where it nucleates assembly of the body of the 30S subunit. Functionally, with S5 and S12 plays an important role in translational accuracy. In Coxiella burnetii (strain CbuK_Q154) (Coxiella burnetii (strain Q154)), this protein is Small ribosomal subunit protein uS4.